Here is a 179-residue protein sequence, read N- to C-terminus: Large ribosomal subunit protein uL5 (179 aa).

This sequence belongs to the universal ribosomal protein uL5 family. In terms of assembly, part of the 50S ribosomal subunit; part of the 5S rRNA/L5/L18/L25 subcomplex. Contacts the 5S rRNA and the P site tRNA. Forms a bridge to the 30S subunit in the 70S ribosome.

Its function is as follows. This is one of the proteins that bind and probably mediate the attachment of the 5S RNA into the large ribosomal subunit, where it forms part of the central protuberance. In the 70S ribosome it contacts protein S13 of the 30S subunit (bridge B1b), connecting the 2 subunits; this bridge is implicated in subunit movement. Contacts the P site tRNA; the 5S rRNA and some of its associated proteins might help stabilize positioning of ribosome-bound tRNAs. This Shewanella denitrificans (strain OS217 / ATCC BAA-1090 / DSM 15013) protein is Large ribosomal subunit protein uL5.